The sequence spans 419 residues: Divergent protein kinase domain 1C (419 aa).

Over 1–22 (MARAAGARGPAGWCRRRGRCGR) the chain is Cytoplasmic. The May mediate ER retention motif lies at 16–17 (RR). Residues 23–43 (GTLLAFAAWTAGWVLAAALLL) form a helical membrane-spanning segment. The Lumenal segment spans residues 44 to 419 (RAHPGVLSER…TLRELQEAEK (376 aa)).

This sequence belongs to the DIPK family. Post-translationally, among the many cysteines in the lumenal domain, most are probably involved in disulfide bonds.

The protein resides in the endoplasmic reticulum membrane. This chain is Divergent protein kinase domain 1C, found in Homo sapiens (Human).